A 357-amino-acid chain; its full sequence is Peptide chain release factor 1 (357 aa).

Gln234 is subject to N5-methylglutamine. Positions 284-307 (KKQEQRSNDRKQQVGSGDRSERIR) are enriched in basic and acidic residues. Positions 284–313 (KKQEQRSNDRKQQVGSGDRSERIRTYNFPQ) are disordered.

The protein belongs to the prokaryotic/mitochondrial release factor family. Methylated by PrmC. Methylation increases the termination efficiency of RF1.

It localises to the cytoplasm. In terms of biological role, peptide chain release factor 1 directs the termination of translation in response to the peptide chain termination codons UAG and UAA. This chain is Peptide chain release factor 1, found in Borrelia hermsii (strain HS1 / DAH).